The sequence spans 704 residues: Elongation factor G 1 (704 aa).

The tr-type G domain occupies 8 to 291 (ERYRNIGISA…AVIDYLPSPA (284 aa)). GTP-binding positions include 17–24 (AHIDAGKT), 88–92 (DTPGH), and 142–145 (NKMD).

The protein belongs to the TRAFAC class translation factor GTPase superfamily. Classic translation factor GTPase family. EF-G/EF-2 subfamily.

Its subcellular location is the cytoplasm. In terms of biological role, catalyzes the GTP-dependent ribosomal translocation step during translation elongation. During this step, the ribosome changes from the pre-translocational (PRE) to the post-translocational (POST) state as the newly formed A-site-bound peptidyl-tRNA and P-site-bound deacylated tRNA move to the P and E sites, respectively. Catalyzes the coordinated movement of the two tRNA molecules, the mRNA and conformational changes in the ribosome. This is Elongation factor G 1 from Burkholderia mallei (strain ATCC 23344).